Consider the following 151-residue polypeptide: MTVMIKKIARKKCIHVMLVYTGGCNACDIEVVNAIFSPFYDAEQYNVFLTFNPREADILVVTGCVTKVVAESLRKIYEKIPEPKAVVAVGACALMGGVYKNIGGDLGTSDFVAGPVENIIPVDVKVPGCAPRPEDIIAGIVKALPKVIEGK.

The [4Fe-4S] cluster site is built by Cys24, Cys27, Cys92, and Cys129.

It belongs to the complex I 20 kDa subunit family. [4Fe-4S] cluster serves as cofactor.

This is an uncharacterized protein from Methanocaldococcus jannaschii (strain ATCC 43067 / DSM 2661 / JAL-1 / JCM 10045 / NBRC 100440) (Methanococcus jannaschii).